The chain runs to 298 residues: MSERIVPSGDVELWSDDFGDPADPALLLVMGGNLSALGWPDEFARRLADGGLHVIRYDHRDTGRSTTRDFAAHPYGFGELAADAVAVLDGWGVDRAHVVGLSMGATITQVIALDHHDRLSSLTMLLGGGLDIDFDANIERVMRGEPTLDGLPGPQQPFLDALALMNQPAEGRAAEVAKRVSKWRILSGTGVPFDDAEYARWEERAIDHAGGVLAEPYAHYSLTLPPPSRAAELREVTVPTLVIQAEHDPIAPAPHGKHLAGLIPTARLAEIPGMGHALPSSVHGPLAEVILAHTRSAA.

One can recognise an AB hydrolase-1 domain in the interval 24-277 (PALLLVMGGN…LAEIPGMGHA (254 aa)). Catalysis depends on residues serine 102, aspartate 248, and histidine 276.

Belongs to the AB hydrolase superfamily. Hydrolase RdmC family. As to quaternary structure, monomer.

It carries out the reaction aclacinomycin T + H2O = 15-demethylaclacinomycin T + methanol. The protein operates within antibiotic biosynthesis; aclacinomycin biosynthesis. Functionally, involved in the biosynthesis of the anthracycline aclacinomycin which is an aromatic polyketide antibiotic that exhibits high cytotoxicity and is widely applied in the chemotherapy of a variety of cancers. Catalyzes the removal of the methoxy group from the C-15 position of aclacinomycin T and A to yield 15-demethoxyaclacinomycin T and A, respectively. The protein is Aclacinomycin methylesterase RdmC (rdmC) of Streptomyces purpurascens.